The sequence spans 349 residues: 2-oxoglutarate and iron-dependent oxygenase domain-containing protein 2 (349 aa).

In terms of domain architecture, Fe2OG dioxygenase spans D214–A308. The Fe cation site is built by H234, D236, and H289. R299 contacts 2-oxoglutarate.

Belongs to the OGFOD2 family. Requires Fe(2+) as cofactor. The cofactor is L-ascorbate.

The protein is 2-oxoglutarate and iron-dependent oxygenase domain-containing protein 2 (Ogfod2) of Mus musculus (Mouse).